Consider the following 426-residue polypeptide: Histidine--tRNA ligase (426 aa).

Belongs to the class-II aminoacyl-tRNA synthetase family. In terms of assembly, homodimer.

It localises to the cytoplasm. It carries out the reaction tRNA(His) + L-histidine + ATP = L-histidyl-tRNA(His) + AMP + diphosphate + H(+). This is Histidine--tRNA ligase from Streptococcus pyogenes serotype M6 (strain ATCC BAA-946 / MGAS10394).